A 195-amino-acid chain; its full sequence is Imidazoleglycerol-phosphate dehydratase (195 aa).

The protein belongs to the imidazoleglycerol-phosphate dehydratase family.

It is found in the cytoplasm. The enzyme catalyses D-erythro-1-(imidazol-4-yl)glycerol 3-phosphate = 3-(imidazol-4-yl)-2-oxopropyl phosphate + H2O. It functions in the pathway amino-acid biosynthesis; L-histidine biosynthesis; L-histidine from 5-phospho-alpha-D-ribose 1-diphosphate: step 6/9. The polypeptide is Imidazoleglycerol-phosphate dehydratase (Acetivibrio thermocellus (strain ATCC 27405 / DSM 1237 / JCM 9322 / NBRC 103400 / NCIMB 10682 / NRRL B-4536 / VPI 7372) (Clostridium thermocellum)).